Here is a 60-residue protein sequence, read N- to C-terminus: Large ribosomal subunit protein bL33 (60 aa).

The protein belongs to the bacterial ribosomal protein bL33 family.

This chain is Large ribosomal subunit protein bL33, found in Chlorobium phaeovibrioides (strain DSM 265 / 1930) (Prosthecochloris vibrioformis (strain DSM 265)).